Here is a 389-residue protein sequence, read N- to C-terminus: Monomeric sarcosine oxidase (389 aa).

8–38 is a binding site for FAD; it reads DVIVVGAGSMGMAAGYYLSKQGVKTLLVDSF. The residue at position 318 (cysteine 318) is an S-8alpha-FAD cysteine.

It belongs to the MSOX/MTOX family. MSOX subfamily. As to quaternary structure, monomer. FAD serves as cofactor.

The protein localises to the cytoplasm. The enzyme catalyses sarcosine + O2 + H2O = formaldehyde + glycine + H2O2. In terms of biological role, catalyzes the oxidative demethylation of sarcosine. The protein is Monomeric sarcosine oxidase (soxA) of Arthrobacter sp. (strain TE1826).